The primary structure comprises 651 residues: Probable potassium transport system protein Kup (651 aa).

12 helical membrane passes run 41–61, 82–102, 130–150, 163–183, 194–214, 235–255, 276–296, 309–329, 366–386, 395–415, 426–446, and 450–470; these read LVLGALGVVYGDIGTSPIYAF, VVSLIFWALTLVVTVKYVLFV, LILGVGICGAALFFGDAVITP, IVAPNLTPFVVPATVVILVTL, VAIVFGPIMALWFVALGASGL, FLTVSPAVAFVTVGAVFLAMT, WLWIVFPCLLLNYFGQAAFIL, MIPSFALWPMVLLATAATVIA, IYIPRVNLLLGLAVVILVLGF, AYGIAVTGNMLVTTVLLYIVM, ALPIILGFLVIDMLFFSANII, and EGGWASIGIATVLVLIMWTWV.

Belongs to the HAK/KUP transporter (TC 2.A.72) family.

The protein localises to the cell inner membrane. It carries out the reaction K(+)(in) + H(+)(in) = K(+)(out) + H(+)(out). Its function is as follows. Transport of potassium into the cell. Likely operates as a K(+):H(+) symporter. The chain is Probable potassium transport system protein Kup from Brucella melitensis biotype 2 (strain ATCC 23457).